A 173-amino-acid chain; its full sequence is ATP synthase subunit b 1 (173 aa).

Residues 15–37 (TFWVTVAVLIFLAFFGRKIVGAI) traverse the membrane as a helical segment.

It belongs to the ATPase B chain family. F-type ATPases have 2 components, F(1) - the catalytic core - and F(0) - the membrane proton channel. F(1) has five subunits: alpha(3), beta(3), gamma(1), delta(1), epsilon(1). F(0) has three main subunits: a(1), b(2) and c(10-14). The alpha and beta chains form an alternating ring which encloses part of the gamma chain. F(1) is attached to F(0) by a central stalk formed by the gamma and epsilon chains, while a peripheral stalk is formed by the delta and b chains.

The protein localises to the cell inner membrane. In terms of biological role, f(1)F(0) ATP synthase produces ATP from ADP in the presence of a proton or sodium gradient. F-type ATPases consist of two structural domains, F(1) containing the extramembraneous catalytic core and F(0) containing the membrane proton channel, linked together by a central stalk and a peripheral stalk. During catalysis, ATP synthesis in the catalytic domain of F(1) is coupled via a rotary mechanism of the central stalk subunits to proton translocation. Functionally, component of the F(0) channel, it forms part of the peripheral stalk, linking F(1) to F(0). The polypeptide is ATP synthase subunit b 1 (Acidiphilium cryptum (strain JF-5)).